The sequence spans 170 residues: Small ribosomal subunit protein uS15 (170 aa).

A compositionally biased stretch (basic residues) spans 1-10 (MARMHSRKKG). The interval 1–20 (MARMHSRKKGSSGSRPPVVD) is disordered.

It belongs to the universal ribosomal protein uS15 family. As to quaternary structure, part of the 30S ribosomal subunit.

The sequence is that of Small ribosomal subunit protein uS15 from Methanothrix thermoacetophila (strain DSM 6194 / JCM 14653 / NBRC 101360 / PT) (Methanosaeta thermophila).